The sequence spans 323 residues: o-succinylbenzoate synthase (323 aa).

Lys134 functions as the Proton donor in the catalytic mechanism. Asp162, Glu191, and Asp214 together coordinate Mg(2+). Residue Lys236 is the Proton acceptor of the active site.

This sequence belongs to the mandelate racemase/muconate lactonizing enzyme family. MenC type 1 subfamily. A divalent metal cation is required as a cofactor.

The enzyme catalyses (1R,6R)-6-hydroxy-2-succinyl-cyclohexa-2,4-diene-1-carboxylate = 2-succinylbenzoate + H2O. Its pathway is quinol/quinone metabolism; 1,4-dihydroxy-2-naphthoate biosynthesis; 1,4-dihydroxy-2-naphthoate from chorismate: step 4/7. The protein operates within quinol/quinone metabolism; menaquinone biosynthesis. Converts 2-succinyl-6-hydroxy-2,4-cyclohexadiene-1-carboxylate (SHCHC) to 2-succinylbenzoate (OSB). This Yersinia pseudotuberculosis serotype O:3 (strain YPIII) protein is o-succinylbenzoate synthase.